Reading from the N-terminus, the 522-residue chain is Peptide chain release factor 3 (522 aa).

Positions 10–277 (ASRKTFAIIS…TFVDFAPAPS (268 aa)) constitute a tr-type G domain. GTP is bound by residues 19 to 26 (SHPDAGKT), 87 to 91 (DTPGH), and 141 to 144 (NKMD).

This sequence belongs to the TRAFAC class translation factor GTPase superfamily. Classic translation factor GTPase family. PrfC subfamily.

Its subcellular location is the cytoplasm. Increases the formation of ribosomal termination complexes and stimulates activities of RF-1 and RF-2. It binds guanine nucleotides and has strong preference for UGA stop codons. It may interact directly with the ribosome. The stimulation of RF-1 and RF-2 is significantly reduced by GTP and GDP, but not by GMP. The polypeptide is Peptide chain release factor 3 (Listeria monocytogenes serovar 1/2a (strain ATCC BAA-679 / EGD-e)).